The sequence spans 354 residues: NAD-dependent epimerase/dehydratase ALT6 (354 aa).

Lys-41 and Tyr-174 together coordinate NADP(+).

This sequence belongs to the NAD(P)-dependent epimerase/dehydratase family. Dihydroflavonol-4-reductase subfamily.

The protein operates within mycotoxin biosynthesis. In terms of biological role, NAD-dependent epimerase/dehydratase; part of the gene cluster that mediates the biosynthesis of the host-selective toxins (HSTs) AAL-toxins, sphinganine-analog mycotoxins responsible for Alternaria stem canker on tomato by the tomato pathotype. The biosynthesis starts with the polyketide synthase ALT1-catalyzed C-16 carbon chain assembly from one starter acetyl-CoA unit with malonyl-CoA extender units. ALT1 also selectively transfers methyl groups at the first and the third cycle of chain elongation for AAL toxin. The C-16 polyketide chain is released from the enzyme by a nucleophilic attack of a carbanion, which is derived from R-carbon of glycin by decarboxylation, on the carbonyl carbon of polyketide acyl chain. This step is probably catalyzed by a pyridoxal 5'-phosphate-dependent aminoacyl transferase ALT4. The respective functions of the other enzymes encoded by the cluster have still to be elucidated. The sphingosine N-acyltransferase-like protein ALT7 seems not to act as a resistance/self-tolerance factor against the toxin in the toxin biosynthetic gene cluster, contrary to what is expected. This chain is NAD-dependent epimerase/dehydratase ALT6, found in Alternaria alternata (Alternaria rot fungus).